Here is a 317-residue protein sequence, read N- to C-terminus: Olfactory receptor 2G2 (317 aa).

The Extracellular portion of the chain corresponds to 1–28 (MGMVRHTNESNLAGFILLGFSDYPQLQK). The N-linked (GlcNAc...) asparagine glycan is linked to Asn-8. A helical membrane pass occupies residues 29–52 (VLFVLILILYLLTILGNTTIILVS). The Cytoplasmic segment spans residues 53-60 (RLEPKLHM). A helical membrane pass occupies residues 61-82 (PMYFFLSHLSFLYRCFTSSVIP). The Extracellular portion of the chain corresponds to 83-103 (QLLVNLWEPMKTIAYGGCLVH). Cysteines 100 and 192 form a disulfide. The helical transmembrane segment at 104-123 (LYNSHALGSTECVLPAVMSC) threads the bilayer. The Cytoplasmic segment spans residues 124–142 (DRYVAVCRPLHYTVLMHIH). Residues 143–161 (LCMALASMAWLSGIATTLV) form a helical membrane-spanning segment. Topologically, residues 162–198 (QSTLTLQLPFCGHRQVDHFICEVPVLIKLACVGTTFN) are extracellular. The chain crosses the membrane as a helical span at residues 199-222 (EAELFVASILFLIVPVSFILVSSG). At 223 to 239 (YIAHAVLRIKSATRRQK) the chain is on the cytoplasmic side. A helical transmembrane segment spans residues 240–262 (AFGTCFSHLTVVTIFYGTIIFMY). The Extracellular portion of the chain corresponds to 263 to 275 (LQPAKSRSRDQGK). A helical membrane pass occupies residues 276 to 295 (FVSLFYTVVTRMLNPLIYTL). The Cytoplasmic segment spans residues 296–317 (RIKEVKGALKKVLAKALGVNIL).

This sequence belongs to the G-protein coupled receptor 1 family.

The protein localises to the cell membrane. In terms of biological role, odorant receptor. This Homo sapiens (Human) protein is Olfactory receptor 2G2 (OR2G2).